The sequence spans 343 residues: L-idonate 5-dehydrogenase (NAD(P)(+)) (343 aa).

Zn(2+) contacts are provided by Cys40, His65, Cys93, Cys96, Cys99, Cys107, and Glu153.

The protein belongs to the zinc-containing alcohol dehydrogenase family. Zn(2+) is required as a cofactor.

It catalyses the reaction L-idonate + NADP(+) = 5-dehydro-D-gluconate + NADPH + H(+). The enzyme catalyses L-idonate + NAD(+) = 5-dehydro-D-gluconate + NADH + H(+). It participates in carbohydrate acid metabolism; L-idonate degradation. Catalyzes the NADH/NADPH-dependent oxidation of L-idonate to 5-ketogluconate (5KG). This chain is L-idonate 5-dehydrogenase (NAD(P)(+)) (idnD), found in Escherichia coli (strain K12).